The sequence spans 706 residues: Elongation factor G (706 aa).

The 277-residue stretch at 15–291 (LKTRNIGISA…GVLDYLASPV (277 aa)) folds into the tr-type G domain. GTP is bound by residues 24-31 (AHIDSGKT), 91-95 (DTPGH), and 145-148 (NKLD).

It belongs to the TRAFAC class translation factor GTPase superfamily. Classic translation factor GTPase family. EF-G/EF-2 subfamily.

The protein localises to the cytoplasm. Catalyzes the GTP-dependent ribosomal translocation step during translation elongation. During this step, the ribosome changes from the pre-translocational (PRE) to the post-translocational (POST) state as the newly formed A-site-bound peptidyl-tRNA and P-site-bound deacylated tRNA move to the P and E sites, respectively. Catalyzes the coordinated movement of the two tRNA molecules, the mRNA and conformational changes in the ribosome. The protein is Elongation factor G of Leptospira borgpetersenii serovar Hardjo-bovis (strain JB197).